Consider the following 189-residue polypeptide: Recombination protein RecR (189 aa).

The C4-type zinc finger occupies 48–63; sequence CQTCFHLSAEPLCDIC. The 95-residue stretch at 71-165 folds into the Toprim domain; that stretch reads QLLCVVADSR…QVSRIAYGLP (95 aa).

It belongs to the RecR family.

In terms of biological role, may play a role in DNA repair. It seems to be involved in an RecBC-independent recombinational process of DNA repair. It may act with RecF and RecO. The sequence is that of Recombination protein RecR from Prochlorococcus marinus (strain MIT 9313).